Reading from the N-terminus, the 354-residue chain is Fusarinine C esterase sidJ (354 aa).

The protein belongs to the sidJ hydrolase family. In terms of assembly, homodimer.

It catalyses the reaction fusarinine C + 3 H2O = 3 fusarinine + Fe(3+). In terms of biological role, displays specific fusarinine C (FsC) esterase activity but does not hydrolyze triacetylfusarinine C (TAFC), which has the same core structure as fusarinine C. Both extra- and intracellular siderophores have been shown to be crucial for the virulence. Subsequent to chelation of iron and uptake, FsC and TAFC are hydrolyzed and the iron is transferred to the metabolism or to the intracellular siderophore ferricrocin (FC) for transport and storage of iron. The sequence is that of Fusarinine C esterase sidJ from Aspergillus fumigatus (strain ATCC MYA-4609 / CBS 101355 / FGSC A1100 / Af293) (Neosartorya fumigata).